The sequence spans 75 residues: Endogenous retrovirus group K member 10 Np9 protein (75 aa).

The disordered stretch occupies residues 21-43; that stretch reads PTAPKRQRPSRTGHDDDGGFVEK. Positions 32–43 are enriched in basic and acidic residues; sequence TGHDDDGGFVEK.

The protein localises to the nucleus. Its function is as follows. May possess a function in tumorigenesis. In Homo sapiens (Human), this protein is Endogenous retrovirus group K member 10 Np9 protein (ERVK-10).